The following is a 197-amino-acid chain: MKVLQEKILNEGKVLSGDVLKVDAFLNHQIDPVLMQEIGKEFAKRFKEENITKIVTIESSGIAPAVMAALELGVKVIFARKRKSLTLQDNMYVANVYSFTKQETNEISLSRNHIDENDRVLIIDDFLANGQAALGLMSLVEQAGASIAGIGIVIEKAFQDGGKKLREQGVRVESLAEIASLDNGTVTFVQQETAEVK.

The xanthine site is built by L20 and N27. 128–132 (ANGQA) is a binding site for 5-phospho-alpha-D-ribose 1-diphosphate. K156 is a binding site for xanthine.

This sequence belongs to the purine/pyrimidine phosphoribosyltransferase family. Xpt subfamily. As to quaternary structure, homodimer.

It localises to the cytoplasm. The enzyme catalyses XMP + diphosphate = xanthine + 5-phospho-alpha-D-ribose 1-diphosphate. It functions in the pathway purine metabolism; XMP biosynthesis via salvage pathway; XMP from xanthine: step 1/1. Functionally, converts the preformed base xanthine, a product of nucleic acid breakdown, to xanthosine 5'-monophosphate (XMP), so it can be reused for RNA or DNA synthesis. This is Xanthine phosphoribosyltransferase from Bacillus cereus (strain ATCC 14579 / DSM 31 / CCUG 7414 / JCM 2152 / NBRC 15305 / NCIMB 9373 / NCTC 2599 / NRRL B-3711).